The chain runs to 191 residues: Protein UL140 (191 aa).

A helical membrane pass occupies residues 28-48; sequence TLVVFGFIVTLLFFLFMLYFW.

It localises to the host membrane. In Homo sapiens (Human), this protein is Protein UL140 (UL140).